A 169-amino-acid polypeptide reads, in one-letter code: Peptide deformylase (169 aa).

Positions 91 and 133 each coordinate Fe cation. Residue Glu-134 is part of the active site. His-137 contributes to the Fe cation binding site.

This sequence belongs to the polypeptide deformylase family. Fe(2+) serves as cofactor.

The catalysed reaction is N-terminal N-formyl-L-methionyl-[peptide] + H2O = N-terminal L-methionyl-[peptide] + formate. Its function is as follows. Removes the formyl group from the N-terminal Met of newly synthesized proteins. Requires at least a dipeptide for an efficient rate of reaction. N-terminal L-methionine is a prerequisite for activity but the enzyme has broad specificity at other positions. The sequence is that of Peptide deformylase from Haemophilus influenzae (strain 86-028NP).